The sequence spans 281 residues: Ribosomal protein L11 methyltransferase (281 aa).

S-adenosyl-L-methionine is bound by residues T133, G154, D175, and N216.

The protein belongs to the methyltransferase superfamily. PrmA family.

It is found in the cytoplasm. The enzyme catalyses L-lysyl-[protein] + 3 S-adenosyl-L-methionine = N(6),N(6),N(6)-trimethyl-L-lysyl-[protein] + 3 S-adenosyl-L-homocysteine + 3 H(+). Its function is as follows. Methylates ribosomal protein L11. This chain is Ribosomal protein L11 methyltransferase, found in Campylobacter jejuni subsp. jejuni serotype O:6 (strain 81116 / NCTC 11828).